The chain runs to 737 residues: UPF0507 protein YML002W (737 aa).

In terms of domain architecture, VPS9 spans 1-83 (MDSHQLELPD…FEDFNKNTGN (83 aa)).

Belongs to the UPF0507 family.

This Saccharomyces cerevisiae (strain ATCC 204508 / S288c) (Baker's yeast) protein is UPF0507 protein YML002W.